The chain runs to 690 residues: Adhesion G protein-coupled receptor L4 (690 aa).

The first 19 residues, 1–19, serve as a signal peptide directing secretion; the sequence is MKRLPLLVVFSTLLNCSYT. The EGF-like 1 domain occupies 20–57; sequence QNCTKTPCLPNAKCEIRNGIEACYCNMGFSGNGVTICE. At 20 to 432 the chain is on the extracellular side; the sequence is QNCTKTPCLP…DYNILTRITQ (413 aa). Residue N21 is glycosylated (N-linked (GlcNAc...) asparagine). Intrachain disulfides connect C22-C33, C27-C42, C44-C56, C62-C75, C69-C84, and C86-C107. The region spanning 58–108 is the EGF-like 2; calcium-binding domain; that stretch reads DDNECGNLTQSCGENANCTNTEGSYYCMCVPGFRSSSNQDRFITNDGTVCI. N-linked (GlcNAc...) asparagine glycosylation is found at N64 and N74. 6 N-linked (GlcNAc...) asparagine glycosylation sites follow: N127, N177, N188, N249, N381, and N395. One can recognise a GAIN-B domain in the interval 244-419; sequence TEFDTNSTDI…AILMSSGPSI (176 aa). Cystine bridges form between C370–C401 and C389–C403. The tract at residues 370-419 is GPS; sequence CAFWNYSPDTMNGSWSSEGCELTYSNETHTSCRCNHLTHFAILMSSGPSI. Residues 433–453 form a helical membrane-spanning segment; the sequence is LGIIISLICLAICIFTFWFFS. Residues 454 to 460 lie on the Cytoplasmic side of the membrane; it reads EIQSTRT. A helical membrane pass occupies residues 461–481; sequence TIHKNLCCSLFLAELVFLVGI. The Extracellular portion of the chain corresponds to 482-499; it reads NTNTNKLFCSIIAGLLHY. The helical transmembrane segment at 500-520 threads the bilayer; sequence FFLAAFAWMCIEGIHLYLIVV. The Cytoplasmic portion of the chain corresponds to 521–532; it reads GVIYNKGFLHKN. Residues 533–553 traverse the membrane as a helical segment; the sequence is FYIFGYLSPAVVVGFSAALGY. The Extracellular portion of the chain corresponds to 554-573; it reads RYYGTTKVCWLSTENNFIWS. The helical transmembrane segment at 574–594 threads the bilayer; it reads FIGPACLIILVNLLAFGVIIY. Over 595–618 the chain is Cytoplasmic; it reads KVFRHTAGLKPEVSCFENIRSCAR. The chain crosses the membrane as a helical span at residues 619 to 639; the sequence is GALALLFLLGTTWIFGVLHVV. Residues 640-646 lie on the Extracellular side of the membrane; the sequence is HASVVTA. A helical membrane pass occupies residues 647–667; the sequence is YLFTVSNAFQGMFIFLFLCVL. Residues 668-690 lie on the Cytoplasmic side of the membrane; the sequence is SRKIQEEYYRLFKNVPCCFGCLR.

This sequence belongs to the G-protein coupled receptor 2 family. Adhesion G-protein coupled receptor (ADGR) subfamily. Heterodimer of 2 chains generated by proteolytic processing; the large extracellular N-terminal fragment and the membrane-bound C-terminal fragment predominantly remain associated and non-covalently linked. Glycosylated. In terms of processing, proteolytically cleaved into 2 subunits, an extracellular alpha subunit and a seven-transmembrane subunit. In terms of tissue distribution, detected in the majority of epithelial cells in tumor and normal tissues. Expressed also in human umbilical vein endothelial cells.

The protein resides in the cell membrane. Its function is as follows. Endothelial orphan receptor that acts as a key regulator of angiogenesis. This chain is Adhesion G protein-coupled receptor L4, found in Homo sapiens (Human).